The following is a 764-amino-acid chain: Tyrosine-protein phosphatase corkscrew (764 aa).

One can recognise an SH2 domain in the interval 1 to 95 (WFHGNLSGKE…GTVVHLRQPF (95 aa)). Residues 117–522 (FWEEFESLQQ…KFVYYAVQHY (406 aa)) enclose the Tyrosine-protein phosphatase domain. Positions 174-325 (IRLPTDGDLY…LNGEGNQFKT (152 aa)) are PTPase insert (Cys/Ser-rich). The segment at 246–273 (SKHKRSESMSASANASAAGTGPGTPTAA) is disordered. Residues 255-273 (SASANASAAGTGPGTPTAA) are compositionally biased toward low complexity. Substrate is bound by residues aspartate 422, 460–466 (CSAGIGR), and glutamine 507. Cysteine 460 (phosphocysteine intermediate) is an active-site residue. The disordered stretch occupies residues 599–666 (AAKLQPPLPP…NANGNGNILG (68 aa)). Over residues 612–666 (SNNNNSSGNSGSYCNSSSSTSTAQHNGVVSSSNNCSSGSGSANSSNANGNGNILG) the composition is skewed to low complexity.

This sequence belongs to the protein-tyrosine phosphatase family. Non-receptor class subfamily.

It localises to the cytoplasm. It carries out the reaction O-phospho-L-tyrosyl-[protein] + H2O = L-tyrosyl-[protein] + phosphate. Functionally, required in all receptor tyrosine kinase signaling pathways. Functions downstream of the receptor tyrosine kinase torso, acting in concert with D-Raf via tailless. Also functions downstream of Egfr (epidermal growth factor receptor) and btl (fibroblast growth factor receptor). The SH2 domain suggests that csw effects its role by mediating heteromeric protein interactions. Maternally required for normal determination of cell fates at the termini of the embryo. Required for cell fate specification of the ventral ectoderm, in the developing embryonic CNS and for embryonic tracheal cell migration. Functions during imaginal development for proper formation of adult structures such as eyes, aristae, L5 wing vein and the tarsal claw. The polypeptide is Tyrosine-protein phosphatase corkscrew (csw) (Drosophila virilis (Fruit fly)).